A 595-amino-acid polypeptide reads, in one-letter code: Epsin-2 (595 aa).

Arginine 8, lysine 11, arginine 25, asparagine 30, arginine 63, and histidine 73 together coordinate a 1,2-diacyl-sn-glycero-3-phospho-(1D-myo-inositol-4,5-bisphosphate). One can recognise an ENTH domain in the interval 12–144; sequence NIVNNYSEAE…KDEERLKVER (133 aa). A compositionally biased stretch (polar residues) spans 164–183; it reads NQITFGRGSSQPNLSTSYSE. Disordered regions lie at residues 164-254, 267-289, 305-396, and 423-469; these read NQIT…RLRR, SRRD…PGSH, SGPV…KPSS, and TSKK…PESF. An Omega-N-methylarginine modification is found at arginine 170. 3 positions are modified to phosphoserine: serine 173, serine 192, and serine 195. 2 stretches are compositionally biased toward polar residues: residues 197 to 216 and 235 to 245; these read HGST…PQTS and EQSSESVQTAR. UIM domains lie at 218–237 and 255–274; these read EEEL…AEQS and GDDL…TVKV. A compositionally biased stretch (polar residues) spans 306–337; the sequence is GPVTQKTEPWSAGASANQTNPWGGTVAPSNIT. Tandem repeats lie at residues 313–315, 325–327, 338–340, and 352–354. The segment at 313–389 is 6 X 3 AA repeats of [DE]-P-W; the sequence is EPWSAGASAN…SNAGKTTDAW (77 aa). Polar residues predominate over residues 358-367; sequence TTASTQSVPK. The stretch at 370-372 is repeat 5; it reads DPW. Over residues 374–384 the composition is skewed to polar residues; the sequence is ASQQPASNAGK. Copy 6 of the repeat occupies 387–389; that stretch reads DAW. Residue serine 443 is modified to Phosphoserine. Over residues 449–460 the composition is skewed to low complexity; it reads SQSLTSASSKPS. The residue at position 465 (threonine 465) is a Phosphothreonine. 2 consecutive repeat copies span residues 494-496 and 508-510. The tract at residues 494 to 593 is 3 X 3 AA repeats of N-P-F; it reads NPFLAPGAAA…AQSTGTTNPF (100 aa). Residue serine 526 is modified to Phosphoserine. The stretch at 591–593 is repeat 3; it reads NPF.

This sequence belongs to the epsin family. As to quaternary structure, binds EPS15, AP-2 and clathrin. Interacts with UBQLN2. Interacts with ITSN1. Ubiquitinated.

It is found in the cytoplasm. Plays a role in the formation of clathrin-coated invaginations and endocytosis. This Mus musculus (Mouse) protein is Epsin-2 (Epn2).